The sequence spans 1088 residues: PAN2-PAN3 deadenylation complex catalytic subunit pan2 (1088 aa).

4 WD repeats span residues 16–56, 136–175, 178–224, and 270–309; these read VSTC…YTQF, HKDK…PVNK, AHTG…SLVP, and PLTS…SFSD. The interval 309–443 is linker; sequence DLKLPIQLPN…EDTISGPDSI (135 aa). Positions 443–814 constitute a USP domain; it reads IPKFYQRPVI…IPIIVYYEKL (372 aa). The region spanning 860–1033 is the Exonuclease domain; that stretch reads VGIDSEFVAL…EDALTALKLY (174 aa). 4 residues coordinate a divalent metal cation: D863, E865, D972, and D1025.

It belongs to the peptidase C19 family. PAN2 subfamily. In terms of assembly, forms a heterotrimer with an asymmetric homodimer of the regulatory subunit ppk26/pan3 to form the poly(A)-nuclease (PAN) deadenylation complex. Requires a divalent metal cation as cofactor.

The protein resides in the cytoplasm. The enzyme catalyses Exonucleolytic cleavage of poly(A) to 5'-AMP.. With respect to regulation, positively regulated by the regulatory subunit ppk26/pan3. Catalytic subunit of the poly(A)-nuclease (PAN) deadenylation complex, one of two cytoplasmic mRNA deadenylases involved in mRNA turnover. PAN specifically shortens poly(A) tails of RNA and the activity is stimulated by poly(A)-binding protein pab1. PAN deadenylation is followed by rapid degradation of the shortened mRNA tails by the CCR4-NOT complex. Deadenylated mRNAs are then degraded by two alternative mechanisms, namely exosome-mediated 3'-5' exonucleolytic degradation, or deadenylation-dependent mRNA decaping and subsequent 5'-3' exonucleolytic degradation by xrn1. May also be involved in post-transcriptional maturation of mRNA poly(A) tails. The polypeptide is PAN2-PAN3 deadenylation complex catalytic subunit pan2 (Schizosaccharomyces pombe (strain 972 / ATCC 24843) (Fission yeast)).